The primary structure comprises 371 residues: Vasopressin V2 receptor (371 aa).

Positions 1-30 (MLMASTTSAVPGHPSLPSLPSNSSQERPLD) are disordered. Residues 1 to 38 (MLMASTTSAVPGHPSLPSLPSNSSQERPLDTRDPLLAR) are Extracellular-facing. Residues 15–24 (SLPSLPSNSS) are compositionally biased toward low complexity. An N-linked (GlcNAc...) asparagine glycan is attached at Asn-22. Residues 39-63 (AELALLSIVFVAVALSNGLVLAALA) traverse the membrane as a helical segment. Residues 64–77 (RRGRRGHWAPIHVF) lie on the Cytoplasmic side of the membrane. The chain crosses the membrane as a helical span at residues 78–98 (IGHLCLADLAVALFQVLPQLA). At 99–113 (WKATDRFRGPDALCR) the chain is on the extracellular side. A helical transmembrane segment spans residues 114–135 (AVKYLQMVGMYASSYMILAMTL). The Cytoplasmic segment spans residues 136–159 (DRHRAICRPMLAYRHGSGAHWNRP). A helical transmembrane segment spans residues 160–180 (VLVAWAFSLLLSLPQLFIFAQ). The Extracellular portion of the chain corresponds to 181-200 (RNVEGGSGVTDCWACFAEPW). The helical transmembrane segment at 201-220 (GRRTYVTWIALMVFVAPTLG) threads the bilayer. Topologically, residues 221–271 (IAACQVLIFREIHASLVPGPSERPGGRRRGRRTGSPGEGAHVSAAVAKTVR) are cytoplasmic. Residues 240 to 259 (PSERPGGRRRGRRTGSPGEG) form a disordered region. A helical membrane pass occupies residues 272-293 (MTLVIVVVYVLCWAPFFLVQLW). The Extracellular portion of the chain corresponds to 294–308 (AAWDPEAPLEGAPFV). The helical transmembrane segment at 309-328 (LLMLLASLNSCTNPWIYASF) threads the bilayer. Topologically, residues 329-371 (SSSVSSELRSLLCCARGRTPPSLGPQDESCTTASSSLAKDTSS) are cytoplasmic. 2 S-palmitoyl cysteine lipidation sites follow: Cys-341 and Cys-342. Positions 349 to 371 (PSLGPQDESCTTASSSLAKDTSS) are disordered. Over residues 356–371 (ESCTTASSSLAKDTSS) the composition is skewed to polar residues.

The protein belongs to the G-protein coupled receptor 1 family. Vasopressin/oxytocin receptor subfamily. Interacts with ARRDC4. Identified in a complex containing at least ARRDC4, V2R and HGS. Interacts with TMEM147. In terms of tissue distribution, kidney.

It is found in the cell membrane. Receptor for arginine vasopressin. The activity of this receptor is mediated by G proteins which activate adenylate cyclase. Involved in renal water reabsorption. This chain is Vasopressin V2 receptor (AVPR2), found in Homo sapiens (Human).